We begin with the raw amino-acid sequence, 395 residues long: Yellow-related salivary protein M35 (395 aa).

A signal peptide spans 1–18; it reads MKLILTVLAFLSLQVALS.

This sequence belongs to the major royal jelly protein family. In terms of tissue distribution, salivary gland (at protein level).

Its subcellular location is the secreted. Its function is as follows. Probably modulates blood feeding of sand flies on vertebrate species by binding and sequestering different mediators involved in the host response. Functions as a chemoattractant for host neutrophils; likely acts through a G-protein-coupled receptor and effect is dependent on calcium influx and phosphatidylinositol 3-kinases (PI3K) activity. In terms of biological role, (Microbial infection) Probably enhances infection caused by Leishmania species in the host through augmentation of host neutrophil recruitment into the skin. The protein is Yellow-related salivary protein M35 of Phlebotomus duboscqi (Sandfly).